The primary structure comprises 224 residues: Probable 2-phosphosulfolactate phosphatase (224 aa).

Belongs to the ComB family. Requires Mg(2+) as cofactor.

It catalyses the reaction (2R)-O-phospho-3-sulfolactate + H2O = (2R)-3-sulfolactate + phosphate. This chain is Probable 2-phosphosulfolactate phosphatase, found in Pseudothermotoga lettingae (strain ATCC BAA-301 / DSM 14385 / NBRC 107922 / TMO) (Thermotoga lettingae).